The chain runs to 1383 residues: DNA-directed RNA polymerase subunit beta (1383 aa).

It belongs to the RNA polymerase beta chain family. In terms of assembly, the RNAP catalytic core consists of 2 alpha, 1 beta, 1 beta' and 1 omega subunit. When a sigma factor is associated with the core the holoenzyme is formed, which can initiate transcription.

The enzyme catalyses RNA(n) + a ribonucleoside 5'-triphosphate = RNA(n+1) + diphosphate. Its function is as follows. DNA-dependent RNA polymerase catalyzes the transcription of DNA into RNA using the four ribonucleoside triphosphates as substrates. This Xanthomonas axonopodis pv. citri (strain 306) protein is DNA-directed RNA polymerase subunit beta.